A 406-amino-acid polypeptide reads, in one-letter code: COP9 signalosome complex subunit 4 (406 aa).

Residue A2 is modified to N-acetylalanine. At K25 the chain carries N6-acetyllysine. Residues 197–366 (YRRKFIEAAQ…GIVHFETREA (170 aa)) form the PCI domain.

The protein belongs to the CSN4 family. Component of the CSN complex, composed of COPS1/GPS1, COPS2, COPS3, COPS4, COPS5, COPS6, COPS7 (COPS7A or COPS7B), COPS8 and COPS9. In the complex, it probably interacts directly with COPS1, COPS2, COPS3, COPS5, COPS6, COPS7 (COPS7A or COPS7B) and COPS8. Interacts with TOR1A; the interaction is direct and associates TOR1A and SNAPIN with the CSN complex. Interacts with STON2; controls STON2 neddylation levels. Interacts with ERCC6.

Its subcellular location is the cytoplasm. The protein resides in the nucleus. The protein localises to the cytoplasmic vesicle. It is found in the secretory vesicle. It localises to the synaptic vesicle. Component of the COP9 signalosome complex (CSN), a complex involved in various cellular and developmental processes. The CSN complex is an essential regulator of the ubiquitin (Ubl) conjugation pathway by mediating the deneddylation of the cullin subunits of SCF-type E3 ligase complexes, leading to decrease the Ubl ligase activity of SCF-type complexes such as SCF, CSA or DDB2. Also involved in the deneddylation of non-cullin subunits such as STON2. The complex is also involved in phosphorylation of p53/TP53, c-jun/JUN, IkappaBalpha/NFKBIA, ITPK1, IRF8/ICSBP and SNAPIN, possibly via its association with CK2 and PKD kinases. CSN-dependent phosphorylation of TP53 and JUN promotes and protects degradation by the Ubl system, respectively. This chain is COP9 signalosome complex subunit 4 (COPS4), found in Bos taurus (Bovine).